A 258-amino-acid polypeptide reads, in one-letter code: NAD(P)H-hydrate epimerase (258 aa).

The YjeF N-terminal domain occupies 15-244 (AFQLDQELMS…RIAKEYGIED (230 aa)). A (6S)-NADPHX-binding site is contributed by 75–79 (NNGGD). The K(+) site is built by Asn-76 and Asp-145. (6S)-NADPHX is bound by residues 149–155 (GFSFKPP) and Asp-181. Ser-184 contacts K(+).

This sequence belongs to the NnrE/AIBP family. K(+) serves as cofactor.

The protein localises to the cytoplasm. It is found in the mitochondrion. It catalyses the reaction (6R)-NADHX = (6S)-NADHX. The enzyme catalyses (6R)-NADPHX = (6S)-NADPHX. Catalyzes the epimerization of the S- and R-forms of NAD(P)HX, a damaged form of NAD(P)H that is a result of enzymatic or heat-dependent hydration. This is a prerequisite for the S-specific NAD(P)H-hydrate dehydratase to allow the repair of both epimers of NAD(P)HX. This chain is NAD(P)H-hydrate epimerase, found in Candida albicans (strain SC5314 / ATCC MYA-2876) (Yeast).